A 197-amino-acid chain; its full sequence is dTTP/UTP pyrophosphatase (197 aa).

Aspartate 69 acts as the Proton acceptor in catalysis.

The protein belongs to the Maf family. YhdE subfamily. It depends on a divalent metal cation as a cofactor.

Its subcellular location is the cytoplasm. It carries out the reaction dTTP + H2O = dTMP + diphosphate + H(+). It catalyses the reaction UTP + H2O = UMP + diphosphate + H(+). Functionally, nucleoside triphosphate pyrophosphatase that hydrolyzes dTTP and UTP. May have a dual role in cell division arrest and in preventing the incorporation of modified nucleotides into cellular nucleic acids. The chain is dTTP/UTP pyrophosphatase from Lachnoclostridium phytofermentans (strain ATCC 700394 / DSM 18823 / ISDg) (Clostridium phytofermentans).